Consider the following 556-residue polypeptide: Formate--tetrahydrofolate ligase (556 aa).

Residue 65–72 (TPAGEGKS) coordinates ATP.

This sequence belongs to the formate--tetrahydrofolate ligase family.

The catalysed reaction is (6S)-5,6,7,8-tetrahydrofolate + formate + ATP = (6R)-10-formyltetrahydrofolate + ADP + phosphate. It participates in one-carbon metabolism; tetrahydrofolate interconversion. The sequence is that of Formate--tetrahydrofolate ligase from Clostridium perfringens (strain SM101 / Type A).